Consider the following 244-residue polypeptide: rRNA adenine N-6-methyltransferase (244 aa).

The S-adenosyl-L-methionine site is built by asparagine 11, isoleucine 13, glycine 38, glutamate 59, aspartate 84, and asparagine 101.

The protein belongs to the class I-like SAM-binding methyltransferase superfamily. rRNA adenine N(6)-methyltransferase family.

It carries out the reaction adenosine(2085) in 23S rRNA + 2 S-adenosyl-L-methionine = N(6)-dimethyladenosine(2085) in 23S rRNA + 2 S-adenosyl-L-homocysteine + 2 H(+). This protein produces a dimethylation of the adenine residue at position 2085 in 23S rRNA, resulting in reduced affinity between ribosomes and macrolide-lincosamide-streptogramin B antibiotics. The polypeptide is rRNA adenine N-6-methyltransferase (ermC') (Bacillus subtilis).